The chain runs to 459 residues: Cysteine--tRNA ligase (459 aa).

Zn(2+) is bound at residue cysteine 28. Residues 30-40 carry the 'HIGH' region motif; sequence VTVYDLCHIGH. Positions 209, 234, and 238 each coordinate Zn(2+). The 'KMSKS' region signature appears at 266–270; sequence KMSKS. Residue lysine 269 participates in ATP binding.

It belongs to the class-I aminoacyl-tRNA synthetase family. Monomer. Requires Zn(2+) as cofactor.

It localises to the cytoplasm. It catalyses the reaction tRNA(Cys) + L-cysteine + ATP = L-cysteinyl-tRNA(Cys) + AMP + diphosphate. In Histophilus somni (strain 129Pt) (Haemophilus somnus), this protein is Cysteine--tRNA ligase.